A 322-amino-acid chain; its full sequence is uncharacterized protein (322 aa).

This is an uncharacterized protein from Acanthamoeba polyphaga mimivirus (APMV).